The primary structure comprises 499 residues: Salviol synthase (499 aa).

Residues 4–24 traverse the membrane as a helical segment; sequence HIPSLVLCISFFIFFKIVSKL. Cys436 contributes to the heme binding site.

This sequence belongs to the cytochrome P450 family. Requires heme as cofactor. As to expression, expressed in leaf glandular trichomes.

It is found in the membrane. It catalyses the reaction ferruginol + reduced [NADPH--hemoprotein reductase] + O2 = salviol + oxidized [NADPH--hemoprotein reductase] + H2O + H(+). Its pathway is secondary metabolite biosynthesis; terpenoid biosynthesis. In terms of biological role, monooxygenase involved in the biosynthesis of labdane-related diterpenes natural products. Catalyzes the oxidation of ferruginol to produce salviol. Salviol is an intermediate in the biosynthesis of carnosate, a potent antioxidant. In Salvia pomifera (Apple sage), this protein is Salviol synthase.